Consider the following 24-residue polypeptide: Calcium-binding shell glycoprotein P50 (24 aa).

A disordered region spans residues Lys1–Asn24.

Glycosylated. In terms of tissue distribution, nacreous and prismatic layers of the shell.

Calcium-binding. In Unio pictorum (Painter's mussel), this protein is Calcium-binding shell glycoprotein P50.